The chain runs to 209 residues: Uracil phosphoribosyltransferase (209 aa).

Residues arginine 79, arginine 104, and 131–139 each bind 5-phospho-alpha-D-ribose 1-diphosphate; that span reads DPMLATGGS. Uracil is bound by residues isoleucine 194 and 199 to 201; that span reads GDA. A 5-phospho-alpha-D-ribose 1-diphosphate-binding site is contributed by aspartate 200.

Belongs to the UPRTase family. Requires Mg(2+) as cofactor.

It catalyses the reaction UMP + diphosphate = 5-phospho-alpha-D-ribose 1-diphosphate + uracil. Its pathway is pyrimidine metabolism; UMP biosynthesis via salvage pathway; UMP from uracil: step 1/1. Its activity is regulated as follows. Allosterically activated by GTP. Functionally, catalyzes the conversion of uracil and 5-phospho-alpha-D-ribose 1-diphosphate (PRPP) to UMP and diphosphate. The sequence is that of Uracil phosphoribosyltransferase from Levilactobacillus brevis (strain ATCC 367 / BCRC 12310 / CIP 105137 / JCM 1170 / LMG 11437 / NCIMB 947 / NCTC 947) (Lactobacillus brevis).